The following is a 125-amino-acid chain: Small ribosomal subunit protein uS12 (125 aa).

The residue at position 89 (Asp-89) is a 3-methylthioaspartic acid.

The protein belongs to the universal ribosomal protein uS12 family. Part of the 30S ribosomal subunit. Contacts proteins S8 and S17. May interact with IF1 in the 30S initiation complex.

With S4 and S5 plays an important role in translational accuracy. In terms of biological role, interacts with and stabilizes bases of the 16S rRNA that are involved in tRNA selection in the A site and with the mRNA backbone. Located at the interface of the 30S and 50S subunits, it traverses the body of the 30S subunit contacting proteins on the other side and probably holding the rRNA structure together. The combined cluster of proteins S8, S12 and S17 appears to hold together the shoulder and platform of the 30S subunit. This Ralstonia nicotianae (strain ATCC BAA-1114 / GMI1000) (Ralstonia solanacearum) protein is Small ribosomal subunit protein uS12.